The sequence spans 134 residues: Seminal plasma protein PDC-109 (134 aa).

An N-terminal signal peptide occupies residues 1-25 (MALQLGLFLIWAGVSVFLQLDPVNG). The O-linked (GalNAc...) threonine glycan is linked to threonine 36. 2 consecutive Fibronectin type-II domains span residues 44–88 (PEDE…YCAQ) and 89–134 (RDYA…WKYC). 4 disulfide bridges follow: cysteine 49–cysteine 73, cysteine 63–cysteine 86, cysteine 94–cysteine 119, and cysteine 108–cysteine 134.

The protein belongs to the seminal plasma protein family. As to quaternary structure, homodimer. In terms of processing, O-linked glycan consists of Gal-GalNAc disaccharide which is modified with a sialic acid residue (macro- and/or microheterogeneity account for differences between BSP-A1 and BSP-A2). Major component of seminal plasma.

The protein resides in the secreted. Its function is as follows. Could enhance the fertilizing capacity of bull spermatozoa upon interaction with heparin-like glycosaminoglycans present in the female genital tract. Exhibits both simulatory and inhibitory actions on the release of pituitary gonadotropins. In Bos taurus (Bovine), this protein is Seminal plasma protein PDC-109.